The chain runs to 472 residues: E3 ubiquitin-protein ligase MYLIP-A (472 aa).

An FERM domain is found at 1 to 279 (MLCHVTRPDA…ETHAFYRCDT (279 aa)). The RING-type zinc-finger motif lies at 384-419 (CMLCCEEEIDAAFCPCGHMVCCQNCAAQLQSCPVCR).

As to quaternary structure, interacts with anxa5. Ubiquitous.

The protein localises to the cytoplasm. It is found in the cytosol. It carries out the reaction S-ubiquitinyl-[E2 ubiquitin-conjugating enzyme]-L-cysteine + [acceptor protein]-L-lysine = [E2 ubiquitin-conjugating enzyme]-L-cysteine + N(6)-ubiquitinyl-[acceptor protein]-L-lysine.. It participates in protein modification; protein ubiquitination. In terms of biological role, E3 ubiquitin-protein ligase that mediates ubiquitination and subsequent proteasomal degradation of myosin regulatory light chain (MRLC). Regulates cell movements during gastrulation by acting downstream of fz7 to antagonize the frizzled-signaling pathway. This Danio rerio (Zebrafish) protein is E3 ubiquitin-protein ligase MYLIP-A (mylipa).